A 135-amino-acid polypeptide reads, in one-letter code: Single-stranded DNA-binding protein RIM1, mitochondrial (135 aa).

The transit peptide at methionine 1–methionine 17 directs the protein to the mitochondrion. The SSB domain maps to phenylalanine 19–lysine 117.

As to quaternary structure, homotetramer. Interacts with PIF1.

The protein resides in the mitochondrion. Its function is as follows. This protein binds preferentially and cooperatively to single-stranded DNA (ssDNS). Involved in mitochondrial DNA replication. Stimulates PIF1 helicase activity. The chain is Single-stranded DNA-binding protein RIM1, mitochondrial (RIM1) from Saccharomyces cerevisiae (strain ATCC 204508 / S288c) (Baker's yeast).